The following is a 138-amino-acid chain: MQPDRNLLADLDHIFVDRSLGAVQVPQLLRDAGFRLTTMREHYGETQAQSVSDHKWIAMTAECGWIGFHKDANIRRNAVERRTVLDTGARLFCVPRADILAEQVAARYIASLAAIARAARFPGPFIYTVHPSKIVRVL.

Its function is as follows. Toxic component of a type II toxin-antitoxin (TA) system. An RNase. The cognate antitoxin is VapB45. This Mycobacterium tuberculosis (strain ATCC 25618 / H37Rv) protein is Putative ribonuclease VapC45.